A 308-amino-acid chain; its full sequence is UDP-N-acetylenolpyruvoylglucosamine reductase (308 aa).

Positions 32–197 (QTGGKADYYL…LEAAFTLAPG (166 aa)) constitute an FAD-binding PCMH-type domain. Residue Arg176 is part of the active site. Catalysis depends on Ser226, which acts as the Proton donor. Glu296 is an active-site residue.

The protein belongs to the MurB family. FAD is required as a cofactor.

The protein resides in the cytoplasm. It carries out the reaction UDP-N-acetyl-alpha-D-muramate + NADP(+) = UDP-N-acetyl-3-O-(1-carboxyvinyl)-alpha-D-glucosamine + NADPH + H(+). The protein operates within cell wall biogenesis; peptidoglycan biosynthesis. Cell wall formation. The sequence is that of UDP-N-acetylenolpyruvoylglucosamine reductase from Staphylococcus saprophyticus subsp. saprophyticus (strain ATCC 15305 / DSM 20229 / NCIMB 8711 / NCTC 7292 / S-41).